The sequence spans 375 residues: Chaperone protein DnaJ (375 aa).

The J domain maps to 4–68 (DYYEVLGVGK…QKRAQYDRFG (65 aa)). A CR-type zinc finger spans residues 129-211 (GKETDVEIPK…CRGSGRVKVR (83 aa)). 8 residues coordinate Zn(2+): cysteine 142, cysteine 145, cysteine 159, cysteine 162, cysteine 185, cysteine 188, cysteine 199, and cysteine 202. 4 CXXCXGXG motif repeats span residues 142 to 149 (CDTCHGSG), 159 to 166 (CKTCSGTG), 185 to 192 (CTTCEGKG), and 199 to 206 (CSSCRGSG). The segment at 349 to 375 (LSGEKPGQHGGEDEGFFEKMKRAFRGE) is disordered.

It belongs to the DnaJ family. In terms of assembly, homodimer. Zn(2+) is required as a cofactor.

It localises to the cytoplasm. Participates actively in the response to hyperosmotic and heat shock by preventing the aggregation of stress-denatured proteins and by disaggregating proteins, also in an autonomous, DnaK-independent fashion. Unfolded proteins bind initially to DnaJ; upon interaction with the DnaJ-bound protein, DnaK hydrolyzes its bound ATP, resulting in the formation of a stable complex. GrpE releases ADP from DnaK; ATP binding to DnaK triggers the release of the substrate protein, thus completing the reaction cycle. Several rounds of ATP-dependent interactions between DnaJ, DnaK and GrpE are required for fully efficient folding. Also involved, together with DnaK and GrpE, in the DNA replication of plasmids through activation of initiation proteins. The polypeptide is Chaperone protein DnaJ (Brevibacillus choshinensis).